A 376-amino-acid chain; its full sequence is TelA-like protein SE_1089 (376 aa).

The protein belongs to the TelA family.

The protein is TelA-like protein SE_1089 of Staphylococcus epidermidis (strain ATCC 12228 / FDA PCI 1200).